The primary structure comprises 59 residues: Protein SspF (59 aa).

Belongs to the alpha/beta-type SASP family.

Its function is as follows. May play some important role in either sporulation or the dormant spore. The chain is Protein SspF (sspF) from Bacillus cereus (strain ATCC 14579 / DSM 31 / CCUG 7414 / JCM 2152 / NBRC 15305 / NCIMB 9373 / NCTC 2599 / NRRL B-3711).